Reading from the N-terminus, the 462-residue chain is Asparagine--tRNA ligase (462 aa).

The protein belongs to the class-II aminoacyl-tRNA synthetase family. As to quaternary structure, homodimer.

Its subcellular location is the cytoplasm. The enzyme catalyses tRNA(Asn) + L-asparagine + ATP = L-asparaginyl-tRNA(Asn) + AMP + diphosphate + H(+). The polypeptide is Asparagine--tRNA ligase (Borreliella afzelii (strain PKo) (Borrelia afzelii)).